Reading from the N-terminus, the 205-residue chain is Listeria nuclear targeted protein A (205 aa).

The N-terminal stretch at 1 to 36 is a signal peptide; sequence MKKLVAWFNGLSKMWKVVVIIGAVFVVIIALTTGED.

In terms of assembly, interacts specifically with host BAHD1.

The protein resides in the secreted. The protein localises to the host nucleus. Its function is as follows. Relieves the repression of host cell immune response genes (interferon-stimulated genes) by blocking the recruitment of host BAHD1 to these genes. May modulate interferon-mediated immune response to control bacterial colonization of the host. In Listeria monocytogenes serovar 1/2a (strain ATCC BAA-679 / EGD-e), this protein is Listeria nuclear targeted protein A (lntA).